The following is a 181-amino-acid chain: 6,7-dimethyl-8-ribityllumazine synthase (181 aa).

5-amino-6-(D-ribitylamino)uracil contacts are provided by residues Tyr27, 58–60, and 87–89; these read ALE and CVI. 92 to 93 contributes to the (2S)-2-hydroxy-3-oxobutyl phosphate binding site; that stretch reads ET. His95 acts as the Proton donor in catalysis. Asn120 contributes to the 5-amino-6-(D-ribitylamino)uracil binding site. A (2S)-2-hydroxy-3-oxobutyl phosphate-binding site is contributed by Arg134.

Belongs to the DMRL synthase family.

It catalyses the reaction (2S)-2-hydroxy-3-oxobutyl phosphate + 5-amino-6-(D-ribitylamino)uracil = 6,7-dimethyl-8-(1-D-ribityl)lumazine + phosphate + 2 H2O + H(+). The protein operates within cofactor biosynthesis; riboflavin biosynthesis; riboflavin from 2-hydroxy-3-oxobutyl phosphate and 5-amino-6-(D-ribitylamino)uracil: step 1/2. Functionally, catalyzes the formation of 6,7-dimethyl-8-ribityllumazine by condensation of 5-amino-6-(D-ribitylamino)uracil with 3,4-dihydroxy-2-butanone 4-phosphate. This is the penultimate step in the biosynthesis of riboflavin. This is 6,7-dimethyl-8-ribityllumazine synthase from Methylobacterium sp. (strain 4-46).